The chain runs to 345 residues: Polyprenyl transferase dpmpC (345 aa).

8 helical membrane passes run 24-44, 60-80, 101-121, 183-203, 220-240, 261-281, 286-306, and 319-339; these read PVFASFAGLWSTLLAGAARLA, GLCFLAAYIFYGAGTVWNDWV, VTTFQAMLWMVLQTLATWYLL, LYVYPQYILGFIVAWPAVIGW, CLPLCSMVYFWIIYLNTAYSY, HLHLLLVALASPVPVCMLLFL, SFWLWATWLGGWTASFAEQLI, and LHKSNFMLGIWTIFACAVELL.

It belongs to the UbiA prenyltransferase family. Requires Mg(2+) as cofactor.

The protein localises to the membrane. It participates in secondary metabolite biosynthesis; terpenoid biosynthesis. Its function is as follows. Polyprenyl transferase; part of the gene cluster that mediates the biosynthesis of diterpenoid pyrones. The first step of the pathway is the synthesis of the alpha-pyrone moiety by the polyketide synthase dpmpA via condensation of one acetyl-CoA starter unit with 3 malonyl-CoA units and 2 methylations. The alpha-pyrone is then combined with geranylgeranyl pyrophosphate (GGPP) formed by the GGPP synthase dpmpD through the action of the prenyltransferase dpmpC to yield a linear alpha-pyrone diterpenoid. Subsequent steps in the diterpenoid pyrone biosynthetic pathway involve the decalin core formation, which is initiated by the epoxidation of the C10-C11 olefin by the FAD-dependent oxidoreductase dpmpE, and is followed by a cyclization cascade catalyzed by the terpene cyclase dpmpB. The short chain dehydrogenase/reductase dpmpG then oxidizes the 8S hydroxy group to a ketone and the short chain dehydrogenase/reductase dpmpH reduces the ketone to the 8R hydroxy group to yield higginsianin B. Higginsianin B is further methylated by the methyltransferase dpmpI to produce the intermediate named FDDP B. The cytochrome P450 monooxygenase dpmpJ then oxidizes the C-26 methyl to primary alcohol, producing the final diterpenoid pyrone with a C-26 primary alcohol on the gamma-pyrone moiety named FDDP C. This chain is Polyprenyl transferase dpmpC, found in Macrophomina phaseolina (strain MS6) (Charcoal rot fungus).